Here is a 51-residue protein sequence, read N- to C-terminus: uncharacterized protein (51 aa).

This is an uncharacterized protein from Bacillus subtilis (strain 168).